A 476-amino-acid polypeptide reads, in one-letter code: Glutamate--tRNA ligase (476 aa).

The short motif at 9-19 (PSPTGTLHLGT) is the 'HIGH' region element. The 'KMSKS' region signature appears at 248–252 (KLSKR). An ATP-binding site is contributed by lysine 251.

This sequence belongs to the class-I aminoacyl-tRNA synthetase family. Glutamate--tRNA ligase type 1 subfamily. In terms of assembly, monomer.

The protein localises to the cytoplasm. It catalyses the reaction tRNA(Glu) + L-glutamate + ATP = L-glutamyl-tRNA(Glu) + AMP + diphosphate. Catalyzes the attachment of glutamate to tRNA(Glu) in a two-step reaction: glutamate is first activated by ATP to form Glu-AMP and then transferred to the acceptor end of tRNA(Glu). The chain is Glutamate--tRNA ligase from Prochlorococcus marinus (strain NATL1A).